Reading from the N-terminus, the 196-residue chain is ATP-dependent Clp protease proteolytic subunit (196 aa).

Residue Ser101 is the Nucleophile of the active site. His126 is an active-site residue.

The protein belongs to the peptidase S14 family. Component of the chloroplastic Clp protease core complex.

It is found in the plastid. The protein resides in the chloroplast stroma. The catalysed reaction is Hydrolysis of proteins to small peptides in the presence of ATP and magnesium. alpha-casein is the usual test substrate. In the absence of ATP, only oligopeptides shorter than five residues are hydrolyzed (such as succinyl-Leu-Tyr-|-NHMec, and Leu-Tyr-Leu-|-Tyr-Trp, in which cleavage of the -Tyr-|-Leu- and -Tyr-|-Trp bonds also occurs).. Its function is as follows. Cleaves peptides in various proteins in a process that requires ATP hydrolysis. Has a chymotrypsin-like activity. Plays a major role in the degradation of misfolded proteins. This chain is ATP-dependent Clp protease proteolytic subunit, found in Populus trichocarpa (Western balsam poplar).